Here is a 353-residue protein sequence, read N- to C-terminus: Ig alpha-1 chain C region (353 aa).

An Ig-like 1 domain is found at 6-98; that stretch reads PKVFPLSLCS…HYTNPSQDVT (93 aa). Intrachain disulfides connect cysteine 26–cysteine 85 and cysteine 77–cysteine 101. The segment at 96–121 is disordered; that stretch reads DVTVPCRVPSTPPTPSPSTPPTPSPP. The segment covering 105 to 121 has biased composition (pro residues); sequence STPPTPSPSTPPTPSPP. Cystine bridges form between cysteine 123-cysteine 180, cysteine 147-cysteine 204, and cysteine 250-cysteine 313. 2 consecutive Ig-like domains span residues 125–220 and 228–330; these read PRLS…ATLS and PEVH…KTID. Residue asparagine 144 is glycosylated (N-linked (GlcNAc...) asparagine). N-linked (GlcNAc...) asparagine glycosylation occurs at asparagine 340. Cysteine 352 provides a ligand contact to 3-hydroxy-L-kynurenine.

In terms of assembly, monomeric or polymeric. Post-translationally, 3-Hydroxykynurenine, an oxidized tryptophan metabolite that is common in biological fluids, reacts with alpha-1-microglobulin to form heterogeneous polycyclic chromophores including hydroxanthommatin. The chromophore reacts with accessible cysteines forming non-reducible thioether cross-links with Ig alpha-1 chain C region Cys-352.

In terms of biological role, ig alpha is the major immunoglobulin class in body secretions. It may serve both to defend against local infection and to prevent access of foreign antigens to the general immunologic system. The polypeptide is Ig alpha-1 chain C region (IGHA1) (Gorilla gorilla gorilla (Western lowland gorilla)).